The following is a 320-amino-acid chain: Ferrochelatase (320 aa).

2 residues coordinate Fe cation: His-194 and Glu-275.

The protein belongs to the ferrochelatase family. In terms of assembly, monomer.

The protein localises to the cytoplasm. It carries out the reaction heme b + 2 H(+) = protoporphyrin IX + Fe(2+). The protein operates within porphyrin-containing compound metabolism; protoheme biosynthesis; protoheme from protoporphyrin-IX: step 1/1. Catalyzes the ferrous insertion into protoporphyrin IX. The polypeptide is Ferrochelatase (Shigella boydii serotype 4 (strain Sb227)).